The sequence spans 96 residues: Co-chaperonin GroES (96 aa).

Belongs to the GroES chaperonin family. Heptamer of 7 subunits arranged in a ring. Interacts with the chaperonin GroEL.

The protein resides in the cytoplasm. Together with the chaperonin GroEL, plays an essential role in assisting protein folding. The GroEL-GroES system forms a nano-cage that allows encapsulation of the non-native substrate proteins and provides a physical environment optimized to promote and accelerate protein folding. GroES binds to the apical surface of the GroEL ring, thereby capping the opening of the GroEL channel. The chain is Co-chaperonin GroES from Shewanella oneidensis (strain ATCC 700550 / JCM 31522 / CIP 106686 / LMG 19005 / NCIMB 14063 / MR-1).